The sequence spans 356 residues: S-adenosylmethionine:tRNA ribosyltransferase-isomerase (356 aa).

It belongs to the QueA family. Monomer.

Its subcellular location is the cytoplasm. The enzyme catalyses 7-aminomethyl-7-carbaguanosine(34) in tRNA + S-adenosyl-L-methionine = epoxyqueuosine(34) in tRNA + adenine + L-methionine + 2 H(+). Its pathway is tRNA modification; tRNA-queuosine biosynthesis. Functionally, transfers and isomerizes the ribose moiety from AdoMet to the 7-aminomethyl group of 7-deazaguanine (preQ1-tRNA) to give epoxyqueuosine (oQ-tRNA). This is S-adenosylmethionine:tRNA ribosyltransferase-isomerase from Serratia proteamaculans (strain 568).